The chain runs to 130 residues: Small ribosomal subunit protein uS9 (130 aa).

It belongs to the universal ribosomal protein uS9 family.

The sequence is that of Small ribosomal subunit protein uS9 from Clostridioides difficile (strain 630) (Peptoclostridium difficile).